A 970-amino-acid chain; its full sequence is MDPHQSPADNAASPTKSVKATTKNSSTNNNVNSNNSNNNSNHDILNFNDNYTTILQHLANDHPNILREKGGSQQQQHQQQQQQQQQQQQQQQQQSLDTLLHHYQSLLSKSDNAIAFDDNVSNSADHNGSNSNNNNNNNDISSPGNLMGSCNQCRLKKTKCNYFPDLGNCLECETSRTKCTFSIAPNYLKRTSSGANNNMPTSSNSKRMKNFEDYSNRLPSSMLYRHQQQQQQQQQQQRIQYPRSSFFVGPASVFDLNLTKHVRLDNVDQIQLSKTLSLRKVSPTAQFILQDDFDTTLHSKQEYEVDLVENLVHPHGHLLVEIFFKLIHPFLPILHERVFLEKYSRSYRELTAPLLASIYSLALQYWDFHPALLGFPKPDVTAQLNNIALETFYARVGRPKLSIIQTGLLILQCRSECHNNWVLCSSVVALAEELGLGVECNDWKLPKWEKDLRKRLAWAVWLMDKWCALNEGRQSHLILGRNWMIKLLNFDDFPLNSPTILNSLQNDQSGSSPSSSNDVKNHQIAFGNLPIFNINPTLEDFKNGTLMFQQMVSLSIILGEIMDTFYTQGSMTINKSIEQVLKLAKPLQLKLREWYHSLPKNLSMSYATPQKLNSNSTLTLAYFATEITLHRKIICALNPQTPKELVQVCRTAARTRLVAAIEFIRDLKNEHINAFWYNCSTGNLMLIGTFAALLYVTSATKEEAMIFRDYVRNYTWVLKIGSKYFDKLSNALNNMHLLFAQIPGLLTDEPVVVSPNSNINSVNPQRSGVQSQIPIQFNVGSPAMTEQGSPLNQWKNLPQEILQQLNSFPNGTTSTTTPVNPTSRQTQLESQGSPAINSANNNSNNTPLPFAPNKSSKKTSQSSPNVTPSHMSRHPPSNTSSPRVNSSTNVNSNTQMNASPLTSINETRQESGDAADEKTAGRERTANEESSTELKDDNPNSNQETSATGNQTIKMNDDKNVTINTRETPL.

Disordered regions lie at residues 1–44 (MDPH…NHDI), 64–95 (NILREKGGSQQQQHQQQQQQQQQQQQQQQQQS), and 118–140 (DNVSNSADHNGSNSNNNNNNNDI). Low complexity-rich tracts occupy residues 15–41 (TKSVKATTKNSSTNNNVNSNNSNNNSN), 73–94 (QQQQHQQQQQQQQQQQQQQQQQ), and 121–140 (SNSADHNGSNSNNNNNNNDI). Positions 150 to 179 (CNQCRLKKTKCNYFPDLGNCLECETSRTKC) form a DNA-binding region, zn(2)-C6 fungal-type. Positions 807-823 (SFPNGTTSTTTPVNPTS) are enriched in low complexity. Residues 807 to 970 (SFPNGTTSTT…VTINTRETPL (164 aa)) are disordered. Composition is skewed to polar residues over residues 824–836 (RQTQLESQGSPAI) and 858–870 (KTSQSSPNVTPSH). Residue Ser833 is modified to Phosphoserine. Positions 875–894 (PPSNTSSPRVNSSTNVNSNT) are enriched in low complexity. Positions 895 to 906 (QMNASPLTSINE) are enriched in polar residues. Residues 907-938 (TRQESGDAADEKTAGRERTANEESSTELKDDN) show a composition bias toward basic and acidic residues. 2 stretches are compositionally biased toward polar residues: residues 939 to 954 (PNSNQETSATGNQTIK) and 961 to 970 (VTINTRETPL).

The protein resides in the nucleus. Functionally, positive regulation of genes required for catabolism of GABA (UGA4, UGA1, and UGA2), urea (DUR1 and DUR2), arginine and allantoin. This Saccharomyces cerevisiae (strain ATCC 204508 / S288c) (Baker's yeast) protein is Transcriptional activator protein DAL81 (DAL81).